A 373-amino-acid chain; its full sequence is S-adenosylmethionine:tRNA ribosyltransferase-isomerase (373 aa).

Belongs to the QueA family. Monomer.

The protein resides in the cytoplasm. The catalysed reaction is 7-aminomethyl-7-carbaguanosine(34) in tRNA + S-adenosyl-L-methionine = epoxyqueuosine(34) in tRNA + adenine + L-methionine + 2 H(+). The protein operates within tRNA modification; tRNA-queuosine biosynthesis. Its function is as follows. Transfers and isomerizes the ribose moiety from AdoMet to the 7-aminomethyl group of 7-deazaguanine (preQ1-tRNA) to give epoxyqueuosine (oQ-tRNA). The protein is S-adenosylmethionine:tRNA ribosyltransferase-isomerase of Caulobacter sp. (strain K31).